Consider the following 401-residue polypeptide: Arylacetamide deacetylase-like 2 (401 aa).

Residues 1-18 (MGLKALCLGLLCVLFVSH) form the signal peptide. The Involved in the stabilization of the negatively charged intermediate by the formation of the oxyanion hole signature appears at 111–113 (HGG). An intrachain disulfide couples Cys-116 to Cys-338. Residues Ser-189, Asp-341, and His-371 contribute to the active site.

This sequence belongs to the 'GDXG' lipolytic enzyme family.

It is found in the secreted. This is Arylacetamide deacetylase-like 2 (AADACL2) from Homo sapiens (Human).